We begin with the raw amino-acid sequence, 91 residues long: Small ribosomal subunit protein uS19 (91 aa).

The protein belongs to the universal ribosomal protein uS19 family.

In terms of biological role, protein S19 forms a complex with S13 that binds strongly to the 16S ribosomal RNA. In Colwellia psychrerythraea (strain 34H / ATCC BAA-681) (Vibrio psychroerythus), this protein is Small ribosomal subunit protein uS19.